The following is a 433-amino-acid chain: 2,2-dialkylglycine decarboxylase (433 aa).

Lys-272 is subject to N6-(pyridoxal phosphate)lysine.

The protein belongs to the class-III pyridoxal-phosphate-dependent aminotransferase family. As to quaternary structure, homotetramer. Pyridoxal 5'-phosphate is required as a cofactor.

The catalysed reaction is 2,2-dialkylglycine + pyruvate + H(+) = dialkyl ketone + L-alanine + CO2. The dialkylglycine decarboxylase is of interest because it normally catalyzes both decarboxylation and amino transfer. It may be more properly described as a decarboxylating aminotransferase rather than an aminotransferring decarboxylase. In Burkholderia cepacia (Pseudomonas cepacia), this protein is 2,2-dialkylglycine decarboxylase (dgdA).